The chain runs to 214 residues: Probable adenylyl-sulfate kinase (214 aa).

13-20 (GLSGAGKT) serves as a coordination point for ATP. Residue Ser-87 is the Phosphoserine intermediate of the active site. The segment at 174–199 (WNRTNTFPLKSRPNPPHRHKSKSSRA) is disordered.

This sequence belongs to the APS kinase family.

It carries out the reaction adenosine 5'-phosphosulfate + ATP = 3'-phosphoadenylyl sulfate + ADP + H(+). Its pathway is sulfur metabolism; hydrogen sulfide biosynthesis; sulfite from sulfate: step 2/3. Catalyzes the synthesis of activated sulfate. This is Probable adenylyl-sulfate kinase from Pseudomonas aeruginosa.